A 272-amino-acid chain; its full sequence is Short-chain dehydrogenase reductase ATA1 (272 aa).

Residue 14–38 (IITGGARGIGAATARLFTENGAYVI) coordinates NADP(+). Ser143 is a substrate binding site. The active-site Proton acceptor is the Tyr156. Lys160 provides a ligand contact to NADP(+).

The protein belongs to the short-chain dehydrogenases/reductases (SDR) family. In terms of tissue distribution, expressed specifically in tapetal cells.

Functionally, may play a role in tapetum development. The polypeptide is Short-chain dehydrogenase reductase ATA1 (Arabidopsis thaliana (Mouse-ear cress)).